The sequence spans 244 residues: Glucosamine-6-phosphate deaminase (244 aa).

The Proton acceptor; for enolization step role is filled by Asp-67. The active-site For ring-opening step is Asn-133. His-135 functions as the Proton acceptor; for ring-opening step in the catalytic mechanism. Catalysis depends on Glu-140, which acts as the For ring-opening step.

The protein belongs to the glucosamine/galactosamine-6-phosphate isomerase family. NagB subfamily.

It carries out the reaction alpha-D-glucosamine 6-phosphate + H2O = beta-D-fructose 6-phosphate + NH4(+). It participates in amino-sugar metabolism; N-acetylneuraminate degradation; D-fructose 6-phosphate from N-acetylneuraminate: step 5/5. Functionally, catalyzes the reversible isomerization-deamination of glucosamine 6-phosphate (GlcN6P) to form fructose 6-phosphate (Fru6P) and ammonium ion. This chain is Glucosamine-6-phosphate deaminase, found in Mycoplasma mycoides subsp. mycoides SC (strain CCUG 32753 / NCTC 10114 / PG1).